Consider the following 145-residue polypeptide: Large ribosomal subunit protein uL15 (145 aa).

The segment at 1 to 58 is disordered; sequence MFNLLKPKGASKRRKIVGRGPGSGLGKTSGRGQKGQKARNTSPRLGFEGGQTPLYRRL. A compositionally biased stretch (gly residues) spans 19 to 33; sequence RGPGSGLGKTSGRGQ.

Belongs to the universal ribosomal protein uL15 family. Part of the 50S ribosomal subunit.

Its function is as follows. Binds to the 23S rRNA. In Borrelia garinii subsp. bavariensis (strain ATCC BAA-2496 / DSM 23469 / PBi) (Borreliella bavariensis), this protein is Large ribosomal subunit protein uL15.